A 505-amino-acid chain; its full sequence is Lysine--tRNA ligase (505 aa).

Mg(2+) contacts are provided by Glu-415 and Glu-422.

The protein belongs to the class-II aminoacyl-tRNA synthetase family. In terms of assembly, homodimer. Requires Mg(2+) as cofactor.

The protein localises to the cytoplasm. The enzyme catalyses tRNA(Lys) + L-lysine + ATP = L-lysyl-tRNA(Lys) + AMP + diphosphate. The sequence is that of Lysine--tRNA ligase from Salmonella paratyphi C (strain RKS4594).